A 225-amino-acid polypeptide reads, in one-letter code: Insulin-induced gene 2 protein (225 aa).

Topologically, residues 1-28 (MAEGETESPGPKKCGPYISSVTSQSVNL) are cytoplasmic. Residues 29–51 (MIRGVVLFFIGVFLALVLNLLQI) form a helical membrane-spanning segment. The Lumenal portion of the chain corresponds to 52–70 (QRNVTLFPPDVIASIFSSA). A helical transmembrane segment spans residues 71–88 (WWVPPCCGTASAVIGLLY). At 89 to 103 (PCIDRHLGEPHKFKR) the chain is on the cytoplasmic side. Residues 104 to 126 (EWSSVMRCVAVFVGINHASAKVD) form a helical membrane-spanning segment. Topologically, residues 127–129 (FDN) are lumenal. A helical membrane pass occupies residues 130-148 (NIQLSLTLAALSIGLWWTF). Residues 149-153 (DRSRS) lie on the Cytoplasmic side of the membrane. A Phosphoserine modification is found at serine 151. Residues 154–175 (GFGLGVGIAFLATLVTQLLVYN) traverse the membrane as a helical segment. Over 176 to 189 (GVYQYTSPDFLYVR) the chain is Lumenal. Residues 190-207 (SWLPCIFFAGGITMGNIG) form a helical membrane-spanning segment. The Cytoplasmic segment spans residues 208–225 (RQLAMYECKVIAEKSHQE). Cysteine sulfenic acid (-SOH); alternate is present on cysteine 215. Residue cysteine 215 forms a Glycyl cysteine thioester (Cys-Gly) (interchain with G-Cter in ubiquitin); alternate linkage. Residues 219 to 225 (AEKSHQE) carry the KxHxx motif.

It belongs to the INSIG family. Interacts with SCAP; interaction is direct and only takes place in the presence of sterols; it prevents interaction between SCAP and the coat protein complex II (COPII). Associates with the SCAP-SREBP complex (composed of SCAP and SREBF1/SREBP1 or SREBF2/SREBP2); association is mediated via its interaction with SCAP and only takes place in the presence of sterols. Interacts with RNF139. Interacts with RNF145. Post-translationally, phosphorylation at Ser-151 by PCK1 reduces binding to oxysterol, disrupting the interaction between INSIG2 and SCAP, thereby promoting nuclear translocation of SREBP proteins (SREBF1/SREBP1 or SREBF2/SREBP2) and subsequent transcription of downstream lipogenesis-related genes. In terms of processing, polyubiquitinated by AMFR/gp78 at Cys-215 in some tissues such as adipose tissues, undifferentiated myoblasts and liver, leading to its degradation. In differentiated myotubes, Cys-215 oxidation prevents ubiquitination at the same site, resulting in protein stabilization. Oxidized at Cys-215 in differentiated myotubes, preventing ubiquitination at the same site, and resulting in protein stabilization.

The protein localises to the endoplasmic reticulum membrane. In terms of biological role, oxysterol-binding protein that mediates feedback control of cholesterol synthesis by controlling both endoplasmic reticulum to Golgi transport of SCAP and degradation of HMGCR. Acts as a negative regulator of cholesterol biosynthesis by mediating the retention of the SCAP-SREBP complex in the endoplasmic reticulum, thereby blocking the processing of sterol regulatory element-binding proteins (SREBPs) SREBF1/SREBP1 and SREBF2/SREBP2. Binds oxysterol, including 22-hydroxycholesterol, 24-hydroxycholesterol, 25-hydroxycholesterol and 27-hydroxycholesterol, regulating interaction with SCAP and retention of the SCAP-SREBP complex in the endoplasmic reticulum. In presence of oxysterol, interacts with SCAP, retaining the SCAP-SREBP complex in the endoplasmic reticulum, thereby preventing SCAP from escorting SREBF1/SREBP1 and SREBF2/SREBP2 to the Golgi. Sterol deprivation or phosphorylation by PCK1 reduce oxysterol-binding, disrupting the interaction between INSIG2 and SCAP, thereby promoting Golgi transport of the SCAP-SREBP complex, followed by processing and nuclear translocation of SREBF1/SREBP1 and SREBF2/SREBP2. Also regulates cholesterol synthesis by regulating degradation of HMGCR: initiates the sterol-mediated ubiquitin-mediated endoplasmic reticulum-associated degradation (ERAD) of HMGCR via recruitment of the reductase to the ubiquitin ligase RNF139. The polypeptide is Insulin-induced gene 2 protein (Papio anubis (Olive baboon)).